We begin with the raw amino-acid sequence, 127 residues long: MNLIAKLEQEEIERALAGKTIPEFAPGDTVIVSVNVVEGNRKRVQAYEGVVIAKRNRGLNSSFIVRKISSGEGVERTFQTYSPLLASIVVKRRGDVRRAKLYYLRERSGKSARIKEKLVSKDRAAQA.

It belongs to the bacterial ribosomal protein bL19 family.

Functionally, this protein is located at the 30S-50S ribosomal subunit interface and may play a role in the structure and function of the aminoacyl-tRNA binding site. This is Large ribosomal subunit protein bL19 from Paraburkholderia phymatum (strain DSM 17167 / CIP 108236 / LMG 21445 / STM815) (Burkholderia phymatum).